Here is a 216-residue protein sequence, read N- to C-terminus: Uracil phosphoribosyltransferase (216 aa).

5-phospho-alpha-D-ribose 1-diphosphate is bound by residues Arg85, Arg110, and 135–143 (DPMVATGYS). Residues Ile200 and 205–207 (GDA) each bind uracil. Asp206 is a binding site for 5-phospho-alpha-D-ribose 1-diphosphate.

It belongs to the UPRTase family. It depends on Mg(2+) as a cofactor.

The enzyme catalyses UMP + diphosphate = 5-phospho-alpha-D-ribose 1-diphosphate + uracil. It functions in the pathway pyrimidine metabolism; UMP biosynthesis via salvage pathway; UMP from uracil: step 1/1. Its activity is regulated as follows. Allosterically activated by GTP. Its function is as follows. Catalyzes the conversion of uracil and 5-phospho-alpha-D-ribose 1-diphosphate (PRPP) to UMP and diphosphate. The protein is Uracil phosphoribosyltransferase of Paraburkholderia phytofirmans (strain DSM 17436 / LMG 22146 / PsJN) (Burkholderia phytofirmans).